Consider the following 550-residue polypeptide: Tyrosinase HcTyr2 (550 aa).

6 residues coordinate Cu cation: H56, H84, H93, H282, H286, and H326.

The protein belongs to the tyrosinase family. It depends on Cu(2+) as a cofactor.

It carries out the reaction L-tyrosine + O2 = L-dopaquinone + H2O. The enzyme catalyses 2 L-tyrosine + O2 = 2 L-dopa. The catalysed reaction is 2 L-dopa + O2 = 2 L-dopaquinone + 2 H2O. In terms of biological role, copper-containing oxidase that catalyzes the conversion of L-tyrosine to L-dopa and then to L-dopaquinone. Can use various phenols such as p-coumaric acid, phenol, pyrocatechol, syringol or pyrogallol. Accepts several of the constituents of lignin and potentially participates in lignin functionalization. The protein is Tyrosinase HcTyr2 of Hahella sp. (strain CCB-MM4).